A 413-amino-acid polypeptide reads, in one-letter code: MDHLKRQDEKVFAAIEAELGRQRSKIELIASENFVSEAVMEAQGSVLTNKYAEGYPGKRYYGGCEHVDVVEDIARDRVKEIFGAEHVNVQPHSGAQANMAVYFTILEQGDTVLGMNLSHGGHLTHGSPVNFSGVQYNFVEYGVDAESHRINYDDVLAKAKEHKPKLIVAGASAYPRVIDFKRFREIADEVGAYLMVDMAHIAGLVAAGLHPNPVPHAHFVTTTTHKTLRGPRGGMILCEEQFAKQIDKSIFPGIQGGPLMHVIAAKAVAFGEALQDDFKTYAQNIINNANRLAEGLQKEGLTLVSGGTDNHLILIDVRNLEITGKVAEHVLDEVGITVNKNTIPFETASPFVTSGVRIGTAAVTSRGFGLEEMDEIASLIAYTLKNHENEAALEEARKRVEALTSKFPMYPNL.

Residues leucine 117 and 121–123 (GHL) each bind (6S)-5,6,7,8-tetrahydrofolate. Residue lysine 226 is modified to N6-(pyridoxal phosphate)lysine. Residues glutamate 239 and 349 to 351 (SPF) contribute to the (6S)-5,6,7,8-tetrahydrofolate site.

The protein belongs to the SHMT family. Homodimer. The cofactor is pyridoxal 5'-phosphate.

It localises to the cytoplasm. It catalyses the reaction (6R)-5,10-methylene-5,6,7,8-tetrahydrofolate + glycine + H2O = (6S)-5,6,7,8-tetrahydrofolate + L-serine. The protein operates within one-carbon metabolism; tetrahydrofolate interconversion. It participates in amino-acid biosynthesis; glycine biosynthesis; glycine from L-serine: step 1/1. Functionally, catalyzes the reversible interconversion of serine and glycine with tetrahydrofolate (THF) serving as the one-carbon carrier. This reaction serves as the major source of one-carbon groups required for the biosynthesis of purines, thymidylate, methionine, and other important biomolecules. Also exhibits THF-independent aldolase activity toward beta-hydroxyamino acids, producing glycine and aldehydes, via a retro-aldol mechanism. This Bacillus cereus (strain AH187) protein is Serine hydroxymethyltransferase.